Here is a 101-residue protein sequence, read N- to C-terminus: Protein S100-A4 (101 aa).

Position 2 is an N-acetylalanine (Ala2). Lys7 is modified (N6-acetyllysine). 2 consecutive EF-hand domains span residues Met12–Gly47 and Thr50–Met85. Ca(2+) is bound by residues Lys28 and Glu33. Lys35 is modified (N6-acetyllysine). The Ca(2+) site is built by Asp63, Asn65, Asp67, Glu69, and Glu74.

This sequence belongs to the S-100 family. Homodimer. Interacts with PPFIBP1 in a calcium-dependent mode. Interacts with PGLYRP1; this complex acts as a chemoattractant that promotes lymphocyte movement. Interacts with MYH9; this interaction increases cell motility. Interacts with Annexin 2/ANXA2. Interacts with TP53; this interaction promotes TP53 degradation. Interacts with CCR5. Interacts with FCGR3A; this interaction inhibits PKC-dependent phosphorylation of FCGR3A. In terms of tissue distribution, ubiquitously expressed.

It is found in the secreted. Its subcellular location is the nucleus. The protein localises to the cytoplasm. Calcium-binding protein that plays a role in various cellular processes including motility, angiogenesis, cell differentiation, apoptosis, and autophagy. Increases cell motility and invasiveness by interacting with non-muscle myosin heavy chain (NMMHC) IIA/MYH9. Mechanistically, promotes filament depolymerization and increases the amount of soluble myosin-IIA, resulting in the formation of stable protrusions facilitating chemotaxis. Also modulates the pro-apoptotic function of TP53 by binding to its C-terminal transactivation domain within the nucleus and reducing its protein levels. Within the extracellular space, stimulates cytokine production including granulocyte colony-stimulating factor and CCL24 from T-lymphocytes. In addition, stimulates T-lymphocyte chemotaxis by acting as a chemoattractant complex with PGLYRP1 that promotes lymphocyte migration via CCR5 and CXCR3 receptors. This Homo sapiens (Human) protein is Protein S100-A4 (S100A4).